The following is a 552-amino-acid chain: DUF724 domain-containing protein 10 (552 aa).

The interval 308–361 (SSLTQGSGDKTEVETQRKTFPKKTLPRNQNGSGNDSTLENENSNRKRKREENLC) is disordered. Residues 333–348 (PRNQNGSGNDSTLENE) show a composition bias toward polar residues. The DUF724 domain maps to 371–543 (ILFEKKLPVW…LEFQATASAP (173 aa)).

Expressed at low levels in leaves, stems, flowers and siliques.

In terms of biological role, may be involved in the polar growth of plant cells via transportation of RNAs. The sequence is that of DUF724 domain-containing protein 10 from Arabidopsis thaliana (Mouse-ear cress).